A 212-amino-acid polypeptide reads, in one-letter code: ATP-dependent dethiobiotin synthetase BioD (212 aa).

Gly13–Val18 lines the ATP pocket. Residue Thr17 participates in Mg(2+) binding. Residue Lys33 is part of the active site. Residue Glu100 coordinates Mg(2+). Residues Glu100–Gly103 and Pro184–Val186 contribute to the ATP site.

It belongs to the dethiobiotin synthetase family. In terms of assembly, homodimer. It depends on Mg(2+) as a cofactor.

The protein localises to the cytoplasm. It catalyses the reaction (7R,8S)-7,8-diammoniononanoate + CO2 + ATP = (4R,5S)-dethiobiotin + ADP + phosphate + 3 H(+). Its pathway is cofactor biosynthesis; biotin biosynthesis; biotin from 7,8-diaminononanoate: step 1/2. Catalyzes a mechanistically unusual reaction, the ATP-dependent insertion of CO2 between the N7 and N8 nitrogen atoms of 7,8-diaminopelargonic acid (DAPA, also called 7,8-diammoniononanoate) to form a ureido ring. The protein is ATP-dependent dethiobiotin synthetase BioD of Nitrobacter hamburgensis (strain DSM 10229 / NCIMB 13809 / X14).